The primary structure comprises 653 residues: Asparagine--tRNA ligase, cytoplasmic (653 aa).

It belongs to the class-II aminoacyl-tRNA synthetase family.

It localises to the cytoplasm. It catalyses the reaction tRNA(Asn) + L-asparagine + ATP = L-asparaginyl-tRNA(Asn) + AMP + diphosphate + H(+). The sequence is that of Asparagine--tRNA ligase, cytoplasmic (asnS1) from Dictyostelium discoideum (Social amoeba).